The chain runs to 313 residues: Methionyl-tRNA formyltransferase (313 aa).

112-115 (SLLP) serves as a coordination point for (6S)-5,6,7,8-tetrahydrofolate.

Belongs to the Fmt family.

The enzyme catalyses L-methionyl-tRNA(fMet) + (6R)-10-formyltetrahydrofolate = N-formyl-L-methionyl-tRNA(fMet) + (6S)-5,6,7,8-tetrahydrofolate + H(+). Attaches a formyl group to the free amino group of methionyl-tRNA(fMet). The formyl group appears to play a dual role in the initiator identity of N-formylmethionyl-tRNA by promoting its recognition by IF2 and preventing the misappropriation of this tRNA by the elongation apparatus. This Geotalea uraniireducens (strain Rf4) (Geobacter uraniireducens) protein is Methionyl-tRNA formyltransferase.